The chain runs to 296 residues: Formamidopyrimidine-DNA glycosylase (296 aa).

Pro-2 (schiff-base intermediate with DNA) is an active-site residue. Glu-3 (proton donor) is an active-site residue. The active-site Proton donor; for beta-elimination activity is the Lys-58. The DNA site is built by His-104, Arg-126, and Lys-169. An FPG-type zinc finger spans residues 260-296; the sequence is SVYDRESQACRTPGCGGTVARIVQAGRSTFYCATCQK. The active-site Proton donor; for delta-elimination activity is the Arg-286.

Belongs to the FPG family. As to quaternary structure, monomer. It depends on Zn(2+) as a cofactor.

The enzyme catalyses Hydrolysis of DNA containing ring-opened 7-methylguanine residues, releasing 2,6-diamino-4-hydroxy-5-(N-methyl)formamidopyrimidine.. It carries out the reaction 2'-deoxyribonucleotide-(2'-deoxyribose 5'-phosphate)-2'-deoxyribonucleotide-DNA = a 3'-end 2'-deoxyribonucleotide-(2,3-dehydro-2,3-deoxyribose 5'-phosphate)-DNA + a 5'-end 5'-phospho-2'-deoxyribonucleoside-DNA + H(+). Functionally, involved in base excision repair of DNA damaged by oxidation or by mutagenic agents. Acts as a DNA glycosylase that recognizes and removes damaged bases. Has a preference for oxidized purines, such as 7,8-dihydro-8-oxoguanine (8-oxoG). Has AP (apurinic/apyrimidinic) lyase activity and introduces nicks in the DNA strand. Cleaves the DNA backbone by beta-delta elimination to generate a single-strand break at the site of the removed base with both 3'- and 5'-phosphates. The chain is Formamidopyrimidine-DNA glycosylase from Rhizobium johnstonii (strain DSM 114642 / LMG 32736 / 3841) (Rhizobium leguminosarum bv. viciae).